A 681-amino-acid chain; its full sequence is UvrABC system protein B (681 aa).

Residues 32-419 form the Helicase ATP-binding domain; that stretch reads ARLSRGERDV…GGEYVEQVIR (388 aa). 45–52 contributes to the ATP binding site; sequence GATGTGKS. A Beta-hairpin motif is present at residues 98–121; sequence YYDYYQPEAYIAQTDTYIEKDSSI. Residues 436–602 enclose the Helicase C-terminal domain; sequence QIDDLIHEIK…PLRKKIADIL (167 aa). Polar residues predominate over residues 607–616; sequence ESKAESTAPS. Residues 607 to 626 are disordered; the sequence is ESKAESTAPSSDAVVVSKTN. The region spanning 636–671 is the UVR domain; the sequence is RSLIDDLTTQMGTAARELKFELAGRLRDEIAELKKE.

It belongs to the UvrB family. Forms a heterotetramer with UvrA during the search for lesions. Interacts with UvrC in an incision complex.

The protein resides in the cytoplasm. Functionally, the UvrABC repair system catalyzes the recognition and processing of DNA lesions. A damage recognition complex composed of 2 UvrA and 2 UvrB subunits scans DNA for abnormalities. Upon binding of the UvrA(2)B(2) complex to a putative damaged site, the DNA wraps around one UvrB monomer. DNA wrap is dependent on ATP binding by UvrB and probably causes local melting of the DNA helix, facilitating insertion of UvrB beta-hairpin between the DNA strands. Then UvrB probes one DNA strand for the presence of a lesion. If a lesion is found the UvrA subunits dissociate and the UvrB-DNA preincision complex is formed. This complex is subsequently bound by UvrC and the second UvrB is released. If no lesion is found, the DNA wraps around the other UvrB subunit that will check the other stand for damage. In Corynebacterium diphtheriae (strain ATCC 700971 / NCTC 13129 / Biotype gravis), this protein is UvrABC system protein B.